Here is a 539-residue protein sequence, read N- to C-terminus: Inosine-5'-monophosphate dehydrogenase (539 aa).

CBS domains follow at residues 140–196 (IIVN…DMPI) and 200–257 (MTRE…PRAC). NAD(+)-binding positions include aspartate 292 and 343-345 (GIG). Glycine 345 and glycine 347 together coordinate K(+). Serine 348 is an IMP binding site. Cysteine 350 is a binding site for K(+). The active-site Thioimidate intermediate is cysteine 350. IMP is bound by residues 383–385 (DGG), 406–407 (GS), and 430–434 (YRGMG). Arginine 446 acts as the Proton acceptor in catalysis. Glutamate 460 is a binding site for IMP. The K(+) site is built by glutamate 514 and histidine 516. Residues 517–539 (PHDIAITQEAPNYSPDVHSGDAG) are disordered.

The protein belongs to the IMPDH/GMPR family. Homotetramer. The cofactor is K(+).

It catalyses the reaction IMP + NAD(+) + H2O = XMP + NADH + H(+). It functions in the pathway purine metabolism; XMP biosynthesis via de novo pathway; XMP from IMP: step 1/1. With respect to regulation, mycophenolic acid (MPA) is a non-competitive inhibitor that prevents formation of the closed enzyme conformation by binding to the same site as the amobile flap. In contrast, mizoribine monophosphate (MZP) is a competitive inhibitor that induces the closed conformation. MPA is a potent inhibitor of mammalian IMPDHs but a poor inhibitor of the bacterial enzymes. MZP is a more potent inhibitor of bacterial IMPDH. Its function is as follows. Catalyzes the conversion of inosine 5'-phosphate (IMP) to xanthosine 5'-phosphate (XMP), the first committed and rate-limiting step in the de novo synthesis of guanine nucleotides, and therefore plays an important role in the regulation of cell growth. The protein is Inosine-5'-monophosphate dehydrogenase of Rhodopirellula baltica (strain DSM 10527 / NCIMB 13988 / SH1).